A 400-amino-acid chain; its full sequence is Coenzyme A biosynthesis bifunctional protein CoaBC (400 aa).

A phosphopantothenoylcysteine decarboxylase region spans residues 1–190 (MKLNGKHIVV…SQKQDLQGLN (190 aa)). Cys-158 (proton donor) is an active-site residue. Residues 191 to 400 (VSITAGPTRE…EIIERYQKTL (210 aa)) are phosphopantothenate--cysteine ligase. CTP contacts are provided by residues 273-275 (GCA), Asp-279, Lys-289, 305-308 (PDII), Phe-324, Lys-338, and Lys-342.

The protein in the N-terminal section; belongs to the HFCD (homo-oligomeric flavin containing Cys decarboxylase) superfamily. This sequence in the C-terminal section; belongs to the PPC synthetase family. Requires Mg(2+) as cofactor. It depends on FMN as a cofactor.

The enzyme catalyses N-[(R)-4-phosphopantothenoyl]-L-cysteine + H(+) = (R)-4'-phosphopantetheine + CO2. It carries out the reaction (R)-4'-phosphopantothenate + L-cysteine + CTP = N-[(R)-4-phosphopantothenoyl]-L-cysteine + CMP + diphosphate + H(+). It participates in cofactor biosynthesis; coenzyme A biosynthesis; CoA from (R)-pantothenate: step 2/5. Its pathway is cofactor biosynthesis; coenzyme A biosynthesis; CoA from (R)-pantothenate: step 3/5. Functionally, catalyzes two sequential steps in the biosynthesis of coenzyme A. In the first step cysteine is conjugated to 4'-phosphopantothenate to form 4-phosphopantothenoylcysteine. In the second step the latter compound is decarboxylated to form 4'-phosphopantotheine. This Haemophilus influenzae (strain ATCC 51907 / DSM 11121 / KW20 / Rd) protein is Coenzyme A biosynthesis bifunctional protein CoaBC.